We begin with the raw amino-acid sequence, 43 residues long: MYRRLLLNLFCMVFLQACLKPMSDPKAEKVDSQVQCGFGSKDC.

Positions 1–17 (MYRRLLLNLFCMVFLQA) are cleaved as a signal peptide.

This is an uncharacterized protein from Helicobacter pylori (strain J99 / ATCC 700824) (Campylobacter pylori J99).